Here is a 322-residue protein sequence, read N- to C-terminus: Transaldolase (322 aa).

Catalysis depends on Lys136, which acts as the Schiff-base intermediate with substrate.

This sequence belongs to the transaldolase family. Type 1 subfamily. In terms of assembly, homodimer.

It localises to the cytoplasm. The enzyme catalyses D-sedoheptulose 7-phosphate + D-glyceraldehyde 3-phosphate = D-erythrose 4-phosphate + beta-D-fructose 6-phosphate. The protein operates within carbohydrate degradation; pentose phosphate pathway; D-glyceraldehyde 3-phosphate and beta-D-fructose 6-phosphate from D-ribose 5-phosphate and D-xylulose 5-phosphate (non-oxidative stage): step 2/3. Transaldolase is important for the balance of metabolites in the pentose-phosphate pathway. The polypeptide is Transaldolase (Xanthomonas oryzae pv. oryzae (strain KACC10331 / KXO85)).